A 130-amino-acid chain; its full sequence is Cytochrome c-type biogenesis protein CcmE (130 aa).

Residues 1–7 (MKKKHKR) are Cytoplasmic-facing. A helical; Signal-anchor for type II membrane protein transmembrane segment spans residues 8–28 (LLITSGIFCFLSCAVFFILTT). Topologically, residues 29–130 (LKENISFFYT…DENYMPKVLK (102 aa)) are extracellular. Heme contacts are provided by histidine 120 and tyrosine 124.

Belongs to the CcmE/CycJ family.

It localises to the cell membrane. Heme chaperone required for the biogenesis of c-type cytochromes. Transiently binds heme delivered by CcmC and transfers the heme to apo-cytochromes in a process facilitated by CcmF and CcmH. This Wolbachia pipientis wMel protein is Cytochrome c-type biogenesis protein CcmE.